A 597-amino-acid chain; its full sequence is Zinc finger CCCH domain-containing protein 29 (597 aa).

2 ANK repeats span residues 76 to 106 (EERT…DVNR) and 111 to 143 (EKVT…SPNC). 2 C3H1-type zinc fingers span residues 254-281 (PYTC…HGVF) and 289-313 (QYRT…HRRD). Positions 320-337 (ASTGSAMVSPRSSNQSPE) are enriched in polar residues. The tract at residues 320–341 (ASTGSAMVSPRSSNQSPEMSVM) is disordered.

Expressed in roots and anthers.

It localises to the nucleus. Its function is as follows. Involved in salt stress response. May positively modulate plant tolerance to salt stress. This is Zinc finger CCCH domain-containing protein 29 from Arabidopsis thaliana (Mouse-ear cress).